A 184-amino-acid chain; its full sequence is Potassium-transporting ATPase KdpC subunit (184 aa).

The chain crosses the membrane as a helical span at residues 10-30 (LTFLMVVLFAVIYPLAIYGIA).

It belongs to the KdpC family. The system is composed of three essential subunits: KdpA, KdpB and KdpC.

The protein localises to the cell inner membrane. In terms of biological role, part of the high-affinity ATP-driven potassium transport (or Kdp) system, which catalyzes the hydrolysis of ATP coupled with the electrogenic transport of potassium into the cytoplasm. This subunit acts as a catalytic chaperone that increases the ATP-binding affinity of the ATP-hydrolyzing subunit KdpB by the formation of a transient KdpB/KdpC/ATP ternary complex. In Flavobacterium psychrophilum (strain ATCC 49511 / DSM 21280 / CIP 103535 / JIP02/86), this protein is Potassium-transporting ATPase KdpC subunit.